A 169-amino-acid polypeptide reads, in one-letter code: Large ribosomal subunit protein uL5 (169 aa).

Belongs to the universal ribosomal protein uL5 family. Part of the 50S ribosomal subunit; contacts the 5S rRNA and probably tRNA. Forms a bridge to the 30S subunit in the 70S ribosome.

This is one of the proteins that bind and probably mediate the attachment of the 5S RNA into the large ribosomal subunit, where it forms part of the central protuberance. In the 70S ribosome it contacts protein S13 of the 30S subunit (bridge B1b), connecting the 2 subunits; this bridge is implicated in subunit movement. May contact the P site tRNA; the 5S rRNA and some of its associated proteins might help stabilize positioning of ribosome-bound tRNAs. The protein is Large ribosomal subunit protein uL5 of Methanosarcina mazei (strain ATCC BAA-159 / DSM 3647 / Goe1 / Go1 / JCM 11833 / OCM 88) (Methanosarcina frisia).